The chain runs to 260 residues: Aspartate/glutamate leucyltransferase (260 aa).

Residues Asp241 to Pro251 are compositionally biased toward basic and acidic residues. Positions Asp241–Glu260 are disordered.

Belongs to the R-transferase family. Bpt subfamily.

The protein localises to the cytoplasm. The enzyme catalyses N-terminal L-glutamyl-[protein] + L-leucyl-tRNA(Leu) = N-terminal L-leucyl-L-glutamyl-[protein] + tRNA(Leu) + H(+). It carries out the reaction N-terminal L-aspartyl-[protein] + L-leucyl-tRNA(Leu) = N-terminal L-leucyl-L-aspartyl-[protein] + tRNA(Leu) + H(+). Its function is as follows. Functions in the N-end rule pathway of protein degradation where it conjugates Leu from its aminoacyl-tRNA to the N-termini of proteins containing an N-terminal aspartate or glutamate. The polypeptide is Aspartate/glutamate leucyltransferase (Gluconacetobacter diazotrophicus (strain ATCC 49037 / DSM 5601 / CCUG 37298 / CIP 103539 / LMG 7603 / PAl5)).